We begin with the raw amino-acid sequence, 478 residues long: Methionine aminopeptidase 2 (478 aa).

Residues 1-122 are disordered; that stretch reads MAGVEEVAAS…TDPPSVPICD (122 aa). A2 carries the N-acetylalanine modification. Over residues 36–46 the composition is skewed to basic residues; that stretch reads KKKRRKKKKSK. S45 bears the Phosphoserine mark. A compositionally biased stretch (basic and acidic residues) spans 55–79; the sequence is EPDKESGASVDEVARQLERSALEDK. 2 positions are modified to phosphoserine; alternate: S60 and S63. O-linked (GlcNAc) serine; alternate glycans are attached at residues S60 and S63. S74 is subject to Phosphoserine. The segment covering 80–92 has biased composition (acidic residues); that stretch reads ERDEDDEDGDGDG. A compositionally biased stretch (basic residues) spans 97–109; sequence GKKKKKKKKKRGP. Residue H231 coordinates substrate. The a divalent metal cation site is built by D251, D262, and H331. Position 339 (H339) interacts with substrate. Residues E364 and E459 each contribute to the a divalent metal cation site.

Belongs to the peptidase M24A family. Methionine aminopeptidase eukaryotic type 2 subfamily. In terms of assembly, interacts strongly with the eIF-2 gamma-subunit EIF2S3. Binds EIF2S1 at low magnesium concentrations. Requires Co(2+) as cofactor. Zn(2+) serves as cofactor. It depends on Mn(2+) as a cofactor. The cofactor is Fe(2+). Contains approximately 12 O-linked N-acetylglucosamine (GlcNAc) residues. O-glycosylation is required for EIF2S1 binding.

The protein resides in the cytoplasm. It catalyses the reaction Release of N-terminal amino acids, preferentially methionine, from peptides and arylamides.. Functionally, cotranslationally removes the N-terminal methionine from nascent proteins. The N-terminal methionine is often cleaved when the second residue in the primary sequence is small and uncharged (Met-Ala-, Cys, Gly, Pro, Ser, Thr, or Val). The catalytic activity of human METAP2 toward Met-Val peptides is consistently two orders of magnitude higher than that of METAP1, suggesting that it is responsible for processing proteins containing N-terminal Met-Val and Met-Thr sequences in vivo. Its function is as follows. Protects eukaryotic initiation factor EIF2S1 from translation-inhibiting phosphorylation by inhibitory kinases such as EIF2AK2/PKR and EIF2AK1/HCR. Plays a critical role in the regulation of protein synthesis. The protein is Methionine aminopeptidase 2 of Homo sapiens (Human).